A 296-amino-acid chain; its full sequence is MIIHPNFDPVAIHLGPLAVRWYGLMYLVGFIFAIVVGRLRLKLPHVAAQGWSAKDIDDMMFYGVLGVVLGGRLGYVLFYKAGYYFSHPLDIFRVWEGGMSFHGGFLGVTLAMALFAWQRKRHWLEVTDFVAPMVPTGLAAGRLGNFINGELWGRVTSPDAPWAMLFPGASRDDAAWLAAHQDIAAKWNLNEVFLSHQMLPRHPSQLYEIALEGIALFFVLWFFSRKPRPMGAISALFLIGYGAARFTVEFAREPDDFLGLLTFGLSMGQWLSLPMIVAGVLMMIWAYRRGGVAKQA.

3 helical membrane-spanning segments follow: residues 17–37, 59–79, and 97–117; these read LAVRWYGLMYLVGFIFAIVVG, MMFYGVLGVVLGGRLGYVLFY, and GGMSFHGGFLGVTLAMALFAW. Arg-142 contributes to the a 1,2-diacyl-sn-glycero-3-phospho-(1'-sn-glycerol) binding site. 2 helical membrane-spanning segments follow: residues 230–250 and 265–285; these read MGAISALFLIGYGAARFTVEF and LSMGQWLSLPMIVAGVLMMIW.

Belongs to the Lgt family.

It is found in the cell inner membrane. It catalyses the reaction L-cysteinyl-[prolipoprotein] + a 1,2-diacyl-sn-glycero-3-phospho-(1'-sn-glycerol) = an S-1,2-diacyl-sn-glyceryl-L-cysteinyl-[prolipoprotein] + sn-glycerol 1-phosphate + H(+). Its pathway is protein modification; lipoprotein biosynthesis (diacylglyceryl transfer). Catalyzes the transfer of the diacylglyceryl group from phosphatidylglycerol to the sulfhydryl group of the N-terminal cysteine of a prolipoprotein, the first step in the formation of mature lipoproteins. This chain is Phosphatidylglycerol--prolipoprotein diacylglyceryl transferase, found in Burkholderia pseudomallei (strain 668).